Reading from the N-terminus, the 47-residue chain is Accessory gland peptide Acp33A (47 aa).

The signal sequence occupies residues 1 to 21; it reads MLPSKRVPFLFTIILFLAGLG.

In terms of tissue distribution, main cells of accessory gland and seminal fluid.

The protein resides in the secreted. Responsible for physiological and behavioral changes in mated female flies. This Drosophila melanogaster (Fruit fly) protein is Accessory gland peptide Acp33A (Acp33A).